A 143-amino-acid chain; its full sequence is Host transcription reprogramming factor 8 (143 aa).

A signal peptide spans 1-19 (MHTYKFIQIALLFASVALA). Residues 24–34 (PSPPNPPPVPQ) are compositionally biased toward pro residues. Residues 24 to 43 (PSPPNPPPVPQLPNSETKSN) are disordered. The segment at 48-71 (HSCEFCGVVKPSGPAYLEHYHQNH) adopts a C2H2-type 1 zinc-finger fold. The interval 77-99 (GKLATPSPPNPPPVPTQKVETHA) is disordered. Pro residues predominate over residues 82–91 (PSPPNPPPVP). Residues 103–126 (HGCEWCNKVEPSGPAYIKHYKENH) form a C2H2-type 2 zinc finger.

The protein localises to the secreted. It localises to the host nucleus. Probable secreted effector that translocates into the nuclei of host cells to reprogram the expression of targeted genes by binding on effector binding elements in rice. This chain is Host transcription reprogramming factor 8, found in Pyricularia oryzae (strain 70-15 / ATCC MYA-4617 / FGSC 8958) (Rice blast fungus).